Reading from the N-terminus, the 868-residue chain is LPS-assembly protein LptD (868 aa).

Positions 1–24 (MLKGIHKYLLMCFGTVLFTVQANA) are cleaved as a signal peptide.

The protein belongs to the LptD family. As to quaternary structure, component of the lipopolysaccharide transport and assembly complex. Interacts with LptE and LptA.

It is found in the cell outer membrane. In terms of biological role, together with LptE, is involved in the assembly of lipopolysaccharide (LPS) at the surface of the outer membrane. The chain is LPS-assembly protein LptD from Francisella tularensis subsp. holarctica (strain LVS).